Here is a 470-residue protein sequence, read N- to C-terminus: Aspartyl aminopeptidase (470 aa).

His-92 contributes to the Zn(2+) binding site. Position 166 (His-166) interacts with substrate. Asp-263 is a Zn(2+) binding site. Residue Glu-299 coordinates substrate. Positions 300 and 343 each coordinate Zn(2+). Residues Asp-343, His-346, Lys-371, and Tyr-378 each coordinate substrate. Zn(2+) is bound at residue His-437.

It belongs to the peptidase M18 family. Tetrahedron-shaped homododecamer built from six homodimers. Zn(2+) serves as cofactor. In terms of tissue distribution, expressed in various cell types and tissues including the pharynx, neurons, body wall muscle, intestine and vulva.

It localises to the cytoplasm. The protein localises to the cytosol. It catalyses the reaction Release of an N-terminal aspartate or glutamate from a peptide, with a preference for aspartate.. In terms of biological role, aminopeptidase with specificity towards an acidic amino acid at the N-terminus. Plays a role in membrane trafficking and is specifically involved in the recycling and degradation of endocytic cargo. The polypeptide is Aspartyl aminopeptidase (Caenorhabditis elegans).